A 149-amino-acid polypeptide reads, in one-letter code: Probable conjugal transfer protein TrbE part 1 (149 aa).

It belongs to the TrbE/VirB4 family.

This Sinorhizobium fredii (strain NBRC 101917 / NGR234) protein is Probable conjugal transfer protein TrbE part 1 (trbEA).